A 155-amino-acid polypeptide reads, in one-letter code: Small ribosomal subunit protein uS7c (155 aa).

It belongs to the universal ribosomal protein uS7 family. Part of the 30S ribosomal subunit.

Its subcellular location is the plastid. The protein localises to the chloroplast. Its function is as follows. One of the primary rRNA binding proteins, it binds directly to 16S rRNA where it nucleates assembly of the head domain of the 30S subunit. This is Small ribosomal subunit protein uS7c (rps7) from Cornus mas (Cornelian cherry dogwood).